Consider the following 241-residue polypeptide: 2,3,4,5-tetrahydropyridine-2,6-dicarboxylate N-acetyltransferase (241 aa).

The protein belongs to the transferase hexapeptide repeat family. DapH subfamily.

The enzyme catalyses (S)-2,3,4,5-tetrahydrodipicolinate + acetyl-CoA + H2O = L-2-acetamido-6-oxoheptanedioate + CoA. It participates in amino-acid biosynthesis; L-lysine biosynthesis via DAP pathway; LL-2,6-diaminopimelate from (S)-tetrahydrodipicolinate (acetylase route): step 1/3. Catalyzes the transfer of an acetyl group from acetyl-CoA to tetrahydrodipicolinate. This chain is 2,3,4,5-tetrahydropyridine-2,6-dicarboxylate N-acetyltransferase, found in Caldanaerobacter subterraneus subsp. tengcongensis (strain DSM 15242 / JCM 11007 / NBRC 100824 / MB4) (Thermoanaerobacter tengcongensis).